A 192-amino-acid polypeptide reads, in one-letter code: HTH-type transcriptional repressor SCO4008 (192 aa).

An HTH tetR-type domain is found at 7 to 67 (EATKARIFEA…SVLEKKMLDL (61 aa)). The H-T-H motif DNA-binding region spans 30–49 (RIDRIAAEARANKQLIYAYY).

In terms of assembly, homodimer. Four dimers bind to the two operator sites.

Its activity is regulated as follows. Binding of a wide range of cationic hydrophobic compounds to SCO4008 causes a decrease in DNA-binding, probably via allosteric conformational change of SCO4008. Probably regulates the expression of its own gene and the adjacent SCO4007 gene by binding to two operator sites in the SCO4007-SCO4008 intergenic region. The chain is HTH-type transcriptional repressor SCO4008 from Streptomyces coelicolor (strain ATCC BAA-471 / A3(2) / M145).